Here is a 499-residue protein sequence, read N- to C-terminus: Hepatic triacylglycerol lipase (499 aa).

A signal peptide spans 1–21 (MGSPLCVPIFLAVCILIQSST). N78 carries N-linked (GlcNAc...) asparagine glycosylation. Residue S168 is the Nucleophile of the active site. The active-site Charge relay system is the D194. The interval 254 to 277 (CHFLELYKHIAQHGLNALSQTIKC) is essential for determining substrate specificity. H279 acts as the Charge relay system in catalysis. Residues 352-486 (YHYQFKIQFI…HPTQEKNFVR (135 aa)) enclose the PLAT domain. A glycan (N-linked (GlcNAc...) asparagine) is linked at N397.

Belongs to the AB hydrolase superfamily. Lipase family. In terms of assembly, homodimer.

It is found in the secreted. It catalyses the reaction a triacylglycerol + H2O = a diacylglycerol + a fatty acid + H(+). The catalysed reaction is a 1-acyl-sn-glycero-3-phosphocholine + H2O = sn-glycerol 3-phosphocholine + a fatty acid + H(+). It carries out the reaction a 1,2-diacyl-sn-glycero-3-phosphocholine + H2O = a 2-acyl-sn-glycero-3-phosphocholine + a fatty acid + H(+). The enzyme catalyses 1,2,3-tri-(9Z-octadecenoyl)-glycerol + H2O = di-(9Z)-octadecenoylglycerol + (9Z)-octadecenoate + H(+). It catalyses the reaction 1,2-di-(9Z-octadecenoyl)-sn-glycero-3-phosphocholine + H2O = (9Z-octadecenoyl)-sn-glycero-3-phosphocholine + (9Z)-octadecenoate + H(+). The catalysed reaction is 1,2,3-tributanoylglycerol + H2O = dibutanoylglycerol + butanoate + H(+). It carries out the reaction 1,2-dihexadecanoyl-sn-glycero-3-phosphocholine + H2O = hexadecanoyl-sn-glycero-3-phosphocholine + hexadecanoate + H(+). The enzyme catalyses 1,2-di-(9Z-octadecenoyl)-sn-glycerol + H2O = 2-(9Z-octadecenoyl)-glycerol + (9Z)-octadecenoate + H(+). It catalyses the reaction 1,2,3-tri-(9Z-octadecenoyl)-glycerol + H2O = 2,3-di-(9Z)-octadecenoyl-sn-glycerol + (9Z)-octadecenoate + H(+). The catalysed reaction is 1-(9Z-octadecenoyl)-sn-glycero-3-phospho-L-serine + H2O = sn-glycero-3-phospho-L-serine + (9Z)-octadecenoate + H(+). It carries out the reaction 1-hexadecanoyl-sn-glycero-3-phosphocholine + H2O = sn-glycerol 3-phosphocholine + hexadecanoate + H(+). The enzyme catalyses 1,3-di-(9Z-octadecenoyl)-glycerol + H2O = 3-(9Z-octadecenoyl)-sn-glycerol + (9Z)-octadecenoate + H(+). In terms of biological role, catalyzes the hydrolysis of triglycerides and phospholipids present in circulating plasma lipoproteins, including chylomicrons, intermediate density lipoproteins (IDL), low density lipoproteins (LDL) of large size and high density lipoproteins (HDL), releasing free fatty acids (FFA) and smaller lipoprotein particles. Also exhibits lysophospholipase activity. Can hydrolyze both neutral lipid and phospholipid substrates but shows a greater binding affinity for neutral lipid substrates than phospholipid substrates. In native LDL, preferentially hydrolyzes the phosphatidylcholine species containing polyunsaturated fatty acids at sn-2 position. The polypeptide is Hepatic triacylglycerol lipase (LIPC) (Oryctolagus cuniculus (Rabbit)).